The sequence spans 468 residues: Glutamate--tRNA ligase (468 aa).

5-7 (RIA) is a binding site for L-glutamate. Residues 8–18 (PSPTGDPHVGT) carry the 'HIGH' region motif. Position 15 (H15) interacts with ATP. L-glutamate is bound by residues E41, 187 to 191 (YHLAN), and R205. ATP-binding positions include E208, L236, 243 to 247 (KISKR), and K246. The 'KMSKS' region motif lies at 243 to 247 (KISKR). The interaction with tRNA stretch occupies residues 432 to 447 (QPLRAALTGSLETPGL).

It belongs to the class-I aminoacyl-tRNA synthetase family. Glutamate--tRNA ligase type 1 subfamily. In terms of assembly, monomer.

The protein resides in the cytoplasm. The catalysed reaction is tRNA(Glu) + L-glutamate + ATP = L-glutamyl-tRNA(Glu) + AMP + diphosphate. Its activity is regulated as follows. In the absence of bound tRNA, ATP is bound in a non-productive mode, and the enzyme cannot activate amino acids. In terms of biological role, catalyzes the attachment of glutamate to tRNA(Glu) in a two-step reaction: glutamate is first activated by ATP to form Glu-AMP and then transferred to the acceptor end of tRNA(Glu). In Thermus thermophilus (strain ATCC 27634 / DSM 579 / HB8), this protein is Glutamate--tRNA ligase.